A 740-amino-acid polypeptide reads, in one-letter code: Autotransporter adhesin BtaE (740 aa).

The first 11 residues, 1–11 (MFGLSVNHAYA), serve as a signal peptide directing secretion. The segment at 12 to 647 (GPGIFINDGT…LQTLDQANAY (636 aa)) is surface exposed passenger domain. An outer membrane translocation of the passenger domain region spans residues 648-686 (TDKKFGKLNEDIVATRIEARQAAAIGLAAASLRYDDRPG). 4 beta stranded membrane passes run 686 to 696 (GKISAAIGGGF), 700 to 710 (EGAVALGLGHT), 719 to 725 (NLSAATS), and 728 to 739 (NWGMGAGFSYTF). Residues 687-740 (KISAAIGGGFWRGEGAVALGLGHTSEDQRMRSNLSAATSGGNWGMGAGFSYTFN) form a translocator domain region.

The protein belongs to the autotransporter-2 (AT-2) (TC 1.B.40) family. Homotrimer.

It localises to the cell surface. The protein resides in the cell outer membrane. Its function is as follows. Binds to hyaluronic acid and epithelial cells, and is required for full virulence in the mouse model. This Brucella suis biovar 1 (strain 1330) protein is Autotransporter adhesin BtaE.